The primary structure comprises 193 residues: Transcriptional activator GvpE2 (193 aa).

Residue 143–148 (KRKVYR) coordinates DNA. Positions 153 to 184 (QAAIEHVDSVVLQLLTFAVGLQTIMADCIVNQ) are leucine-zipper.

Homodimer. Interacts with endogenous GvpD, also with GvpD from H.mediterranei.

It is found in the cytoplasm. Its activity is regulated as follows. Degraded once GvpD is translated; degradation requires 'Arg-494' of GvpD; tested in transgenic H.volcanii. Fusion of green fluorescent protein to its C-terminus partially protects it from degradation. Its function is as follows. Plays a regulatory role in gas vesicle synthesis, required to activate transcription of the c-gvpA operon. Gas vesicles are hollow, gas filled proteinaceous nanostructures found in several microbial planktonic microorganisms. They allow positioning of halobacteria at the optimal depth for growth in the poorly aerated, shallow brine pools of their habitat. In terms of biological role, expression of 2 c-vac DNA fragments containing 2 divergently transcribed regions (gvpE-gvpF-gvpG-gvpH-gvpI-gvpJ-gvpK-gvpL-gvpM and gvpA-gvpC-gvpN-gvpO) allows H.volcanii to produce gas vesicles. All site-directed mutagenesis is tested in H.volcanii. This is Transcriptional activator GvpE2 from Halobacterium salinarum (strain ATCC 700922 / JCM 11081 / NRC-1) (Halobacterium halobium).